Consider the following 728-residue polypeptide: Phosphoribosylformylglycinamidine synthase subunit PurL (728 aa).

Residue H54 is part of the active site. Y57 and K96 together coordinate ATP. E98 provides a ligand contact to Mg(2+). Substrate-binding positions include 99–102 (SHNH) and R121. H100 (proton acceptor) is an active-site residue. D122 serves as a coordination point for Mg(2+). Substrate is bound at residue Q245. D273 lines the Mg(2+) pocket. Residue 317-319 (ETQ) participates in substrate binding. Positions 495 and 532 each coordinate ATP. N533 serves as a coordination point for Mg(2+). Substrate is bound at residue S535.

This sequence belongs to the FGAMS family. As to quaternary structure, monomer. Part of the FGAM synthase complex composed of 1 PurL, 1 PurQ and 2 PurS subunits.

It is found in the cytoplasm. It carries out the reaction N(2)-formyl-N(1)-(5-phospho-beta-D-ribosyl)glycinamide + L-glutamine + ATP + H2O = 2-formamido-N(1)-(5-O-phospho-beta-D-ribosyl)acetamidine + L-glutamate + ADP + phosphate + H(+). The protein operates within purine metabolism; IMP biosynthesis via de novo pathway; 5-amino-1-(5-phospho-D-ribosyl)imidazole from N(2)-formyl-N(1)-(5-phospho-D-ribosyl)glycinamide: step 1/2. Part of the phosphoribosylformylglycinamidine synthase complex involved in the purines biosynthetic pathway. Catalyzes the ATP-dependent conversion of formylglycinamide ribonucleotide (FGAR) and glutamine to yield formylglycinamidine ribonucleotide (FGAM) and glutamate. The FGAM synthase complex is composed of three subunits. PurQ produces an ammonia molecule by converting glutamine to glutamate. PurL transfers the ammonia molecule to FGAR to form FGAM in an ATP-dependent manner. PurS interacts with PurQ and PurL and is thought to assist in the transfer of the ammonia molecule from PurQ to PurL. In Macrococcus caseolyticus (strain JCSC5402) (Macrococcoides caseolyticum), this protein is Phosphoribosylformylglycinamidine synthase subunit PurL.